The following is a 177-amino-acid chain: Large ribosomal subunit protein uL6 (177 aa).

The protein belongs to the universal ribosomal protein uL6 family. As to quaternary structure, part of the 50S ribosomal subunit.

This protein binds to the 23S rRNA, and is important in its secondary structure. It is located near the subunit interface in the base of the L7/L12 stalk, and near the tRNA binding site of the peptidyltransferase center. This Chelativorans sp. (strain BNC1) protein is Large ribosomal subunit protein uL6.